The primary structure comprises 214 residues: tRNA (guanine-N(7)-)-methyltransferase (214 aa).

Positions 44, 69, 96, and 118 each coordinate S-adenosyl-L-methionine. Asp-118 is an active-site residue. Lys-122 is a substrate binding site. The tract at residues 124–129 is interaction with RNA; that stretch reads RHEKRR. Substrate-binding positions include Asp-154 and 192–195; that span reads TEYE.

This sequence belongs to the class I-like SAM-binding methyltransferase superfamily. TrmB family.

The catalysed reaction is guanosine(46) in tRNA + S-adenosyl-L-methionine = N(7)-methylguanosine(46) in tRNA + S-adenosyl-L-homocysteine. The protein operates within tRNA modification; N(7)-methylguanine-tRNA biosynthesis. In terms of biological role, catalyzes the formation of N(7)-methylguanine at position 46 (m7G46) in tRNA. The chain is tRNA (guanine-N(7)-)-methyltransferase from Lactiplantibacillus plantarum (strain ATCC BAA-793 / NCIMB 8826 / WCFS1) (Lactobacillus plantarum).